Reading from the N-terminus, the 335-residue chain is Atypical chemokine receptor 1 (335 aa).

Over 1 to 62 (MGNCLHPAEL…CNLLDDSALP (62 aa)) the chain is Extracellular. N-linked (GlcNAc...) asparagine glycosylation is found at asparagine 16, asparagine 26, and asparagine 32. Cystine bridges form between cysteine 50–cysteine 275 and cysteine 128–cysteine 194. A helical transmembrane segment spans residues 63–83 (FFILVSVLGILASGTVLFMFF). Topologically, residues 84–94 (RPLFHWQLCPG) are cytoplasmic. Residues 95–115 (WPVLAQLAVGSALFSIVVPIL) form a helical membrane-spanning segment. Over 116–128 (APGLGNTRSSALC) the chain is Extracellular. A helical membrane pass occupies residues 129–152 (SLGYCVWYGSAFAQALLLGCHASL). Residues 153 to 165 (GPKLGAGQVPGLT) are Cytoplasmic-facing. Residues 166–186 (LGLSVGLWGVAALLTLPITLA) form a helical membrane-spanning segment. At 187-206 (SGASGGLCTPAYSMELKALQ) the chain is on the extracellular side. The chain crosses the membrane as a helical span at residues 207–227 (ATHAVACLAVFVLLPLGLFGA). At 228-243 (KGLKKALGMGPGPWMN) the chain is on the cytoplasmic side. The helical transmembrane segment at 244–264 (ILWAWFIFWWPHGVVLGLDFL) threads the bilayer. Residues 265–286 (VRSKLLLLSTCLAQQALDLLLN) are Extracellular-facing. A helical transmembrane segment spans residues 287–307 (LAEALAILHCVATPLLLALFC). Residues 308 to 335 (HQATRTLLPSLPLPEGWSSHLDTLGSES) lie on the Cytoplasmic side of the membrane.

Belongs to the G-protein coupled receptor 1 family. Atypical chemokine receptor subfamily. As to quaternary structure, (Microbial infection) Interacts (via N-terminal extracellular domain) with Plasmodium knowlesi Duffy receptor alpha form (DBPalpha) (via region II).

It is found in the early endosome. The protein localises to the recycling endosome. Its subcellular location is the membrane. Its function is as follows. Atypical chemokine receptor that controls chemokine levels and localization via high-affinity chemokine binding that is uncoupled from classic ligand-driven signal transduction cascades, resulting instead in chemokine sequestration, degradation, or transcytosis. Also known as interceptor (internalizing receptor) or chemokine-scavenging receptor or chemokine decoy receptor. Has a promiscuous chemokine-binding profile, interacting with inflammatory chemokines of both the CXC and the CC subfamilies but not with homeostatic chemokines. Acts as a receptor for chemokines including CCL2, CCL5, CCL7, CCL11, CCL13, CCL14, CCL17, CXCL5, CXCL6, IL8/CXCL8, CXCL11, GRO, RANTES, MCP-1 and TARC. May regulate chemokine bioavailability and, consequently, leukocyte recruitment through two distinct mechanisms: when expressed in endothelial cells, it sustains the abluminal to luminal transcytosis of tissue-derived chemokines and their subsequent presentation to circulating leukocytes; when expressed in erythrocytes, serves as blood reservoir of cognate chemokines but also as a chemokine sink, buffering potential surges in plasma chemokine levels. (Microbial infection) Acts as a receptor for the malaria parasite Plasmodium knowlesi. This chain is Atypical chemokine receptor 1 (ACKR1), found in Macaca mulatta (Rhesus macaque).